Consider the following 603-residue polypeptide: Probable potassium transport system protein Kup (603 aa).

A run of 12 helical transmembrane segments spans residues 15–35 (GLVFGDIGTSPIYTLTVIFLL), 43–63 (IIGVLSLIIWTLIILVTVEYA), 94–114 (VAFVTLLAYIGTSFLMGDGVI), 135–155 (NIGQSTIILISAAIAIALFSV), 163–183 (ITWVFGPIMVLWFATIGFSGI), 209–229 (GIIGFFVLSEVILCATGGEAL), 244–264 (AWRFVFLALVLNYLGQGAFLI), 283–303 (ILYIPFLLLSVVATIIASQAM), 336–356 (IYISTVNWLLLVSVLFMMLIF), 365–385 (AYGLAVTGTMSITGIMMTSIF), 390–410 (NITKALISLFITFIDVVFLLS), and 415–435 (IPHGGYWSVIIALFILSLILI).

The protein belongs to the HAK/KUP transporter (TC 2.A.72) family.

It localises to the cell membrane. The enzyme catalyses K(+)(in) + H(+)(in) = K(+)(out) + H(+)(out). Its function is as follows. Transport of potassium into the cell. Likely operates as a K(+):H(+) symporter. In Methanosarcina barkeri (strain Fusaro / DSM 804), this protein is Probable potassium transport system protein Kup.